The sequence spans 310 residues: MAKVRTKDVMEQFHLELISGEEGINRPITMSDLSRPGIEIAGYFTYYPRERVQLLGKTELSFFDQLPEEDKKQRMKSLCTDVTPAIILSRDMPIPPELVEASEQNGVPVLRSPLKTTRLSSRLTNFLESRLAPTTAIHGVLVDIYGVGVLITGKSGVGKSETALELVKRGHRLVADDCVEIRQEDQDTLVGNAPDLIEHLLEIRGLGIINVMTLFGAGAVRSNKRITIVMDLELWEQGKQYDRLGLEEEKMKIIDTEITKLTIPVRPGRNLAVIIEVAAMNFRLKRMGLNAAEQFTNKLADVIEDGEQDE.

Residues His-138 and Lys-159 contribute to the active site. 153 to 160 (GKSGVGKS) lines the ATP pocket. Ser-160 is a Mg(2+) binding site. Asp-177 serves as the catalytic Proton acceptor; for phosphorylation activity. Proton donor; for dephosphorylation activity. Positions 201–210 (LEIRGLGIIN) are important for the catalytic mechanism of both phosphorylation and dephosphorylation. Mg(2+) is bound at residue Glu-202. Residue Arg-243 is part of the active site. Residues 264–269 (PVRPGR) are important for the catalytic mechanism of dephosphorylation.

It belongs to the HPrK/P family. As to quaternary structure, homohexamer. Mg(2+) serves as cofactor.

It carries out the reaction [HPr protein]-L-serine + ATP = [HPr protein]-O-phospho-L-serine + ADP + H(+). The catalysed reaction is [HPr protein]-O-phospho-L-serine + phosphate + H(+) = [HPr protein]-L-serine + diphosphate. Its function is as follows. Catalyzes the ATP- as well as the pyrophosphate-dependent phosphorylation of a specific serine residue in HPr, a phosphocarrier protein of the phosphoenolpyruvate-dependent sugar phosphotransferase system (PTS). HprK/P also catalyzes the pyrophosphate-producing, inorganic phosphate-dependent dephosphorylation (phosphorolysis) of seryl-phosphorylated HPr (P-Ser-HPr). The two antagonistic activities of HprK/P are regulated by several intracellular metabolites, which change their concentration in response to the absence or presence of rapidly metabolisable carbon sources (glucose, fructose, etc.) in the growth medium. Also phosphorylates/dephosphorylates the HPr-like catabolite repression protein crh on a specific serine residue. Therefore, by controlling the phosphorylation state of HPr and crh, HPrK/P is a sensor enzyme that plays a major role in the regulation of carbon metabolism and sugar transport: it mediates carbon catabolite repression (CCR), and regulates PTS-catalyzed carbohydrate uptake and inducer exclusion. This is HPr kinase/phosphorylase from Bacillus velezensis (strain DSM 23117 / BGSC 10A6 / LMG 26770 / FZB42) (Bacillus amyloliquefaciens subsp. plantarum).